The chain runs to 555 residues: MTRHDATRVIRAATGTTLTAKSWLTEAPLRMLMNNLDPDVAEHPQELVVYGGIGRAARDWESFDAIVAALTRLDEDQTLLVQSGKPVGVFRTHADAPRVLIANSNLVPRWANWDHFSELDQKGLAMYGQMTAGSWIYIGAQGIVQGTYETFVEMGRQHYAGNLAGKWLFTGGLGGMGGAQPLAAVMAGASCLVVECRRSSIDMRLRTGYLDTWTDSLDEALRLIEESCTAKKPLSVGLLGNVADVLDELLLRGIKPDLLTDQTSAHDPVNGYLPQGWSVEEWDAKRVSARKEVEAAARESMANHIRAMLTFHALGVPTVDYGNNLRQMALEAGIDNAFDFPGFVPAYIRPLFCRGIGPFRWVALSGDPDDIAKTDAKVKELIPDDAHLHRWLDMAAEKIAFQGLPARICWVGLGDRHRLGLAFNAMVRSGELKAPVVIGRDHLDSGSVASPNRETEAMADGSDAVSDWPLLNALLNTASGATWVSLHHGGGVGMGFSQHAGMVIVCDGSEAADKRIERVLWNDPATGVMRHADAGYAIATDCAKEKGLDLPGILR.

Residues 51 to 52 (GG), glutamine 129, 175 to 177 (GMG), glutamate 195, 262 to 266 (QTSAH), 272 to 273 (YL), and tyrosine 321 contribute to the NAD(+) site. Cysteine 409 is an active-site residue. Glycine 491 provides a ligand contact to NAD(+).

It belongs to the urocanase family. The cofactor is NAD(+).

Its subcellular location is the cytoplasm. It catalyses the reaction 4-imidazolone-5-propanoate = trans-urocanate + H2O. It functions in the pathway amino-acid degradation; L-histidine degradation into L-glutamate; N-formimidoyl-L-glutamate from L-histidine: step 2/3. Catalyzes the conversion of urocanate to 4-imidazolone-5-propionate. This chain is Urocanate hydratase, found in Xanthomonas euvesicatoria pv. vesicatoria (strain 85-10) (Xanthomonas campestris pv. vesicatoria).